The following is a 1210-amino-acid chain: Inner capsid protein VP3 (1210 aa).

Residues 1–28 (MPRTSRNVRATEVATTAIPPSNAATDTT) form a disordered region. The C2H2-type zinc-finger motif lies at 113-136 (LRCQQCGAKFSSMTQLAEHVRTEH). The segment at 294 to 319 (PHAGPQVRSVQSQDQQVYSVDSGPDP) is disordered. Low complexity predominate over residues 299-315 (QVRSVQSQDQQVYSVDS).

It belongs to the turreted BTV-fold inner capsid family. As to quaternary structure, homodecamer; each decamer is made up of two conformers of VP2, called VP2A and VP2B. 12 homodecamers assemble to form an icosahedral capsid. Interacts with VP6.

It localises to the virion. Functionally, inner capsid protein that self-assembles to form an icosahedral capsid with a T=2 symmetry, which consists of 120 copies of VP2, with channels at each of its five-fold vertices. This capsid constitutes the innermost concentric layer of the viral mature particle. This chain is Inner capsid protein VP3 (S3), found in Aquareovirus A (isolate Chum salmon/Japan/CSRV/1981) (AQRV-A).